The primary structure comprises 278 residues: Envelope glycoprotein L (278 aa).

The signal sequence occupies residues 1–30 (MCRRPDCGFSFSPGPVILLWCCLLLPIVSS). Positions 43–256 (VPAECPELTR…DKYYAGLPPE (214 aa)) constitute a gL betaherpesvirus-type domain. Residues C154 and C159 are joined by a disulfide bond.

Belongs to the herpesviridae glycoprotein L (gL) family. Betaherpesvirinae gL subfamily. As to quaternary structure, interacts with glycoprotein H (gH); this interaction is necessary for the correct processing and cell surface expression of gH. Forms the envelope pentamer complex (PC) composed of gH, gL, UL128, UL130, and UL131A. The pentamer interacts with host NRP2. Forms the envelope trimer complex composed of gH, gL, and gO. The trimer interacts with host PDGFRA. The trimer also interacts with host EPHA2.

The protein localises to the virion membrane. It is found in the host cell membrane. Its subcellular location is the host Golgi apparatus. It localises to the host trans-Golgi network. Functionally, the heterodimer glycoprotein H-glycoprotein L is required for the fusion of viral and plasma membranes leading to virus entry into the host cell. Acts as a functional inhibitor of gH and maintains gH in an inhibited form. Upon binding to host integrins, gL dissociates from gH leading to activation of the viral fusion glycoproteins gB and gH. In human cytomegalovirus, forms two distincts complexes to mediate viral entry, a trimer and a pentamer at the surface of the virion envelope. The gH-gL-gO trimer is required for infection in fibroblasts by interacting with host PDGFRA, and in glioblastoma cells by interacting with host EPHA2. The gH-gL-UL128-UL130-UL131A pentamer is essential for viral entry in epithelial, endothelial and myeloid cells via interaction with host NRP2. This is Envelope glycoprotein L from Human cytomegalovirus (strain 5160) (HHV-5).